A 619-amino-acid polypeptide reads, in one-letter code: Dihydroxy-acid dehydratase (619 aa).

Asp-81 lines the Mg(2+) pocket. Position 122 (Cys-122) interacts with [2Fe-2S] cluster. Mg(2+) contacts are provided by Asp-123 and Lys-124. At Lys-124 the chain carries N6-carboxylysine. Residue Cys-195 coordinates [2Fe-2S] cluster. Glu-491 contributes to the Mg(2+) binding site. The active-site Proton acceptor is Ser-517.

Belongs to the IlvD/Edd family. Homodimer. [2Fe-2S] cluster serves as cofactor. Mg(2+) is required as a cofactor.

It carries out the reaction (2R)-2,3-dihydroxy-3-methylbutanoate = 3-methyl-2-oxobutanoate + H2O. The enzyme catalyses (2R,3R)-2,3-dihydroxy-3-methylpentanoate = (S)-3-methyl-2-oxopentanoate + H2O. The protein operates within amino-acid biosynthesis; L-isoleucine biosynthesis; L-isoleucine from 2-oxobutanoate: step 3/4. It participates in amino-acid biosynthesis; L-valine biosynthesis; L-valine from pyruvate: step 3/4. Functions in the biosynthesis of branched-chain amino acids. Catalyzes the dehydration of (2R,3R)-2,3-dihydroxy-3-methylpentanoate (2,3-dihydroxy-3-methylvalerate) into 2-oxo-3-methylpentanoate (2-oxo-3-methylvalerate) and of (2R)-2,3-dihydroxy-3-methylbutanoate (2,3-dihydroxyisovalerate) into 2-oxo-3-methylbutanoate (2-oxoisovalerate), the penultimate precursor to L-isoleucine and L-valine, respectively. In Sphingopyxis alaskensis (strain DSM 13593 / LMG 18877 / RB2256) (Sphingomonas alaskensis), this protein is Dihydroxy-acid dehydratase.